The sequence spans 891 residues: Alanine--tRNA ligase (891 aa).

Positions 564, 568, 681, and 685 each coordinate Zn(2+).

This sequence belongs to the class-II aminoacyl-tRNA synthetase family. It depends on Zn(2+) as a cofactor.

The protein localises to the cytoplasm. It catalyses the reaction tRNA(Ala) + L-alanine + ATP = L-alanyl-tRNA(Ala) + AMP + diphosphate. Functionally, catalyzes the attachment of alanine to tRNA(Ala) in a two-step reaction: alanine is first activated by ATP to form Ala-AMP and then transferred to the acceptor end of tRNA(Ala). Also edits incorrectly charged Ser-tRNA(Ala) and Gly-tRNA(Ala) via its editing domain. This Methylorubrum populi (strain ATCC BAA-705 / NCIMB 13946 / BJ001) (Methylobacterium populi) protein is Alanine--tRNA ligase.